We begin with the raw amino-acid sequence, 32 residues long: Photosystem II reaction center protein T (32 aa).

A helical membrane pass occupies residues 3 to 23; that stretch reads AFAYVLILTLAVVTLFFAVAF.

It belongs to the PsbT family. As to quaternary structure, PSII is composed of 1 copy each of membrane proteins PsbA, PsbB, PsbC, PsbD, PsbE, PsbF, PsbH, PsbI, PsbJ, PsbK, PsbL, PsbM, PsbT, PsbX, PsbY, Psb30/Ycf12, peripheral proteins PsbO, CyanoQ (PsbQ), PsbU, PsbV and a large number of cofactors. It forms dimeric complexes.

It localises to the cellular thylakoid membrane. Found at the monomer-monomer interface of the photosystem II (PS II) dimer, plays a role in assembly and dimerization of PSII. PSII is a light-driven water plastoquinone oxidoreductase, using light energy to abstract electrons from H(2)O, generating a proton gradient subsequently used for ATP formation. The protein is Photosystem II reaction center protein T of Prochlorococcus marinus (strain MIT 9301).